A 515-amino-acid chain; its full sequence is Alpha,alpha-trehalose-phosphate synthase [UDP-forming] 1 (515 aa).

Residues Y97 and D151 each coordinate D-glucose 6-phosphate. Positions 287 and 292 each coordinate UDP. The UDP-alpha-D-glucose site is built by R287 and K292. R325 is a binding site for D-glucose 6-phosphate. Residues V364 and 390 to 394 (LVAYE) each bind UDP. Residue 386 to 394 (DGMNLVAYE) coordinates UDP-alpha-D-glucose. The disordered stretch occupies residues 483 to 515 (GKFQSRKAKLPESADAEKPMNGSGESEESQTTQ). Basic and acidic residues predominate over residues 491–500 (KLPESADAEK).

The protein belongs to the glycosyltransferase 20 family.

It catalyses the reaction D-glucose 6-phosphate + UDP-alpha-D-glucose = alpha,alpha-trehalose 6-phosphate + UDP + H(+). Its pathway is carbohydrate biosynthesis. In terms of biological role, synthase catalytic subunit of the trehalose synthase complex that catalyzes the production of trehalose from glucose-6-phosphate and UDP-alpha-D-glucose in a two step process. The disaccharide trehalose serves as a storage carbohydrate that is mobilized during conidial germination. Regulates the level of trehalose as a protectant for cell integrity during thermal and oxidative stress. The polypeptide is Alpha,alpha-trehalose-phosphate synthase [UDP-forming] 1 (Aspergillus fumigatus (strain ATCC MYA-4609 / CBS 101355 / FGSC A1100 / Af293) (Neosartorya fumigata)).